Consider the following 266-residue polypeptide: Probable metal transport system membrane protein TP_0036 (266 aa).

Helical transmembrane passes span 10–30 (AFVA…HLVL), 34–54 (ALMG…AVSC), 56–76 (IHPG…IEFL), 88–108 (LSIV…SGLI), 120–140 (ILVV…FCVG), 172–192 (VASV…GILV), 211–231 (FLLT…LGLV), and 238–258 (VAPG…VIAL).

The protein belongs to the ABC-3 integral membrane protein family.

The protein localises to the cell inner membrane. In terms of biological role, part of an ATP-driven transport system TP_0034/TP_0035/TP_0036 for a metal. The polypeptide is Probable metal transport system membrane protein TP_0036 (Treponema pallidum (strain Nichols)).